The sequence spans 337 residues: Monoacylglycerol lipase abhd6-A (337 aa).

Topologically, residues 1-19 (MDLDVLNMFLVAGGTLLVP) are extracellular. A helical; Signal-anchor for type II membrane protein transmembrane segment spans residues 20–42 (ILAFVTSFLLWPAALIKIYYWYW). The Cytoplasmic segment spans residues 43–337 (RRALGMQVKF…QSTENNKKHE (295 aa)). The region spanning 73–313 (SVLMLHGFSA…CGHSVVMERP (241 aa)) is the AB hydrolase-1 domain. Ser148 functions as the Nucleophile in the catalytic mechanism. Residues Asp278 and His306 each act as charge relay system in the active site.

It belongs to the AB hydrolase superfamily.

It is found in the late endosome membrane. Its subcellular location is the lysosome membrane. The protein localises to the mitochondrion membrane. It carries out the reaction Hydrolyzes glycerol monoesters of long-chain fatty acids.. The enzyme catalyses 1-octanoylglycerol + H2O = octanoate + glycerol + H(+). The catalysed reaction is 1-decanoylglycerol + H2O = decanoate + glycerol + H(+). It catalyses the reaction 1-dodecanoylglycerol + H2O = dodecanoate + glycerol + H(+). It carries out the reaction 1-tetradecanoylglycerol + H2O = tetradecanoate + glycerol + H(+). The enzyme catalyses 2-hexadecanoylglycerol + H2O = glycerol + hexadecanoate + H(+). The catalysed reaction is 2-(9Z-octadecenoyl)-glycerol + H2O = glycerol + (9Z)-octadecenoate + H(+). It catalyses the reaction 1-(9Z-octadecenoyl)-glycerol + H2O = glycerol + (9Z)-octadecenoate + H(+). It carries out the reaction 2-(9Z,12Z-octadecadienoyl)-glycerol + H2O = (9Z,12Z)-octadecadienoate + glycerol + H(+). The enzyme catalyses 2-(5Z,8Z,11Z,14Z-eicosatetraenoyl)-glycerol + H2O = glycerol + (5Z,8Z,11Z,14Z)-eicosatetraenoate + H(+). The catalysed reaction is 1-(5Z,8Z,11Z,14Z-eicosatetraenoyl)-glycerol + H2O = glycerol + (5Z,8Z,11Z,14Z)-eicosatetraenoate + H(+). It catalyses the reaction 1-(9Z,12Z-octadecadienoyl)-glycerol + H2O = (9Z,12Z)-octadecadienoate + glycerol + H(+). It carries out the reaction 3-(9Z-octadecenoyl)-sn-glycero-1-phospho-(3'-(9Z-octadecenoyl)-1'-sn-glycerol) + H2O = 3-(9Z-octadecenoyl)-sn-glycero-1-phospho-(1'-sn-glycerol) + (9Z)-octadecenoate + H(+). The enzyme catalyses (S,S)-2-(9Z-octadecenoyl)-sn-glycero-1-phospho-(2'-(9Z-octadecenoyl)-1'-sn-glycerol) + H2O = (S,S)-2-(9Z-octadecenoyl)-sn-glycero-1-phospho-(1'-sn-glycerol) + (9Z)-octadecenoate + H(+). The catalysed reaction is (R,R)-2-(9Z-octadecenoyl)-sn-glycero-3-phospho-(2'-(9Z-octadecenoyl)-3'-sn-glycerol) + H2O = (R,R)-2-(9Z-octadecenoyl)-sn-glycero-3-phospho-(3'-sn-glycerol) + (9Z)-octadecenoate + H(+). Lipase that preferentially hydrolysis medium-chain saturated monoacylglycerols including 2-arachidonoylglycerol. Through 2-arachidonoylglycerol degradation may regulate endocannabinoid signaling pathways. Also has a lysophosphatidyl lipase activity with a preference for lysophosphatidylglycerol among other lysophospholipids. Also able to degrade bis(monoacylglycero)phosphate (BMP) and constitutes the major enzyme for BMP catabolism. BMP, also known as lysobisphosphatidic acid, is enriched in late endosomes and lysosomes and plays a key role in the formation of intraluminal vesicles and in lipid sorting. This Xenopus laevis (African clawed frog) protein is Monoacylglycerol lipase abhd6-A (abhd6-a).